Reading from the N-terminus, the 216-residue chain is Probable transaldolase (216 aa).

The active-site Schiff-base intermediate with substrate is Lys-83.

Belongs to the transaldolase family. Type 3B subfamily.

Its subcellular location is the cytoplasm. The catalysed reaction is D-sedoheptulose 7-phosphate + D-glyceraldehyde 3-phosphate = D-erythrose 4-phosphate + beta-D-fructose 6-phosphate. It participates in carbohydrate degradation; pentose phosphate pathway; D-glyceraldehyde 3-phosphate and beta-D-fructose 6-phosphate from D-ribose 5-phosphate and D-xylulose 5-phosphate (non-oxidative stage): step 2/3. Transaldolase is important for the balance of metabolites in the pentose-phosphate pathway. The sequence is that of Probable transaldolase from Sphingopyxis alaskensis (strain DSM 13593 / LMG 18877 / RB2256) (Sphingomonas alaskensis).